Consider the following 849-residue polypeptide: G-type lectin S-receptor-like serine/threonine-protein kinase At4g11900 (849 aa).

The N-terminal stretch at 1 to 26 is a signal peptide; that stretch reads MQICKKNVFLLYYGVLVFLSFQVSSS. In terms of domain architecture, Bulb-type lectin spans 27 to 180; it reads TDTISTNQPL…PNSSAAVLWQ (154 aa). Topologically, residues 27–466 are extracellular; it reads TDTISTNQPL…RKTEHSKGKS (440 aa). Asn111, Asn148, Asn172, and Asn232 each carry an N-linked (GlcNAc...) asparagine glycan. The EGF-like domain maps to 311–348; it reads PDNRCDVYNSCGSFGICNENREPPPCRCVPGFKREFSQ. Intrachain disulfides connect Cys315-Cys327, Cys321-Cys336, Cys401-Cys421, and Cys405-Cys411. In terms of domain architecture, PAN spans 368-447; it reads CYKRNDEFLP…KGHTFFLRLA (80 aa). The N-linked (GlcNAc...) asparagine glycan is linked to Asn450. A helical transmembrane segment spans residues 467 to 487; that stretch reads IVLPLVLASLVATAACFVGLY. Residues 488-849 lie on the Cytoplasmic side of the membrane; that stretch reads CCISSRIRRK…EATQTELEAR (362 aa). In terms of domain architecture, Protein kinase spans 537–822; it reads FSRKKKLGEG…TLPIPKQPTF (286 aa). Residues 543 to 551 and Lys565 contribute to the ATP site; that span reads LGEGGFGPV. Ser571 bears the Phosphoserine mark. A caM-binding region spans residues 626-643; that stretch reads LKSRELDWETRMKIVNGT. Catalysis depends on Asp662, which acts as the Proton acceptor. 2 positions are modified to phosphoserine: Ser666 and Ser679. Thr696 bears the Phosphothreonine mark. Ser837 carries the phosphoserine modification. Position 844 is a phosphothreonine (Thr844).

The protein belongs to the protein kinase superfamily. Ser/Thr protein kinase family.

It localises to the cell membrane. The enzyme catalyses L-seryl-[protein] + ATP = O-phospho-L-seryl-[protein] + ADP + H(+). It carries out the reaction L-threonyl-[protein] + ATP = O-phospho-L-threonyl-[protein] + ADP + H(+). The polypeptide is G-type lectin S-receptor-like serine/threonine-protein kinase At4g11900 (Arabidopsis thaliana (Mouse-ear cress)).